We begin with the raw amino-acid sequence, 601 residues long: Casbene synthase, chloroplastic (601 aa).

The N-terminal 56 residues, M1–S56, are a transit peptide targeting the chloroplast. Mg(2+)-binding residues include D355, D359, N499, S503, and E507. A DDXXD motif motif is present at residues D355–D359.

The protein belongs to the terpene synthase family. Mg(2+) is required as a cofactor.

It is found in the plastid. Its subcellular location is the chloroplast. The catalysed reaction is (2E,6E,10E)-geranylgeranyl diphosphate = casbene + diphosphate. Functionally, catalyzes the cyclization of geranylgeranyl diphosphate to casbene, a diterpene phytoalexin with antibacterial and antifungal activity. The polypeptide is Casbene synthase, chloroplastic (Ricinus communis (Castor bean)).